Reading from the N-terminus, the 41-residue chain is U15-myrmicitoxin-Tb1b (41 aa).

An N-terminal signal peptide occupies residues 1-25; the sequence is MKIVKLITIFAMIATLMVTVTNGEA. H40 is modified (histidine amide).

Expressed by the venom gland.

The protein localises to the secreted. Its function is as follows. Venom protein with unknown function. Does not induce paralysis when a high dose is administered by intrathoracic injection into the blowfly Lucilia caesar. This chain is U15-myrmicitoxin-Tb1b, found in Tetramorium bicarinatum (Tramp ant).